Here is a 495-residue protein sequence, read N- to C-terminus: Lysine--tRNA ligase (495 aa).

Mg(2+) contacts are provided by glutamate 406 and glutamate 413.

This sequence belongs to the class-II aminoacyl-tRNA synthetase family. As to quaternary structure, homodimer. Mg(2+) serves as cofactor.

It localises to the cytoplasm. It catalyses the reaction tRNA(Lys) + L-lysine + ATP = L-lysyl-tRNA(Lys) + AMP + diphosphate. This chain is Lysine--tRNA ligase (lysS), found in Staphylococcus aureus.